We begin with the raw amino-acid sequence, 688 residues long: NADH-ubiquinone oxidoreductase 75 kDa subunit (688 aa).

A 2Fe-2S ferredoxin-type domain is found at 1 to 85 (MIIRFKINEI…DESIETEIDE (85 aa)). 4 residues coordinate [2Fe-2S] cluster: Cys-38, Cys-49, Cys-52, and Cys-66. The region spanning 85 to 124 (EILKAREGVMEFLLINHPLDCPICDQGGECDLQEQTLAYG) is the 4Fe-4S His(Cys)3-ligated-type domain. [4Fe-4S] cluster contacts are provided by His-101, Cys-105, Cys-108, Cys-114, Cys-153, Cys-156, Cys-159, and Cys-204. The region spanning 223 to 279 (LKNIKGIDIFDTLLTPINYQVKGGEIFRILPRINDRINEEWITDKVRFHYESYKIIE) is the 4Fe-4S Mo/W bis-MGD-type domain.

The protein belongs to the complex I 75 kDa subunit family. Complex I is composed of about 45 different subunits. It depends on [2Fe-2S] cluster as a cofactor. [4Fe-4S] cluster serves as cofactor.

Its subcellular location is the mitochondrion inner membrane. It carries out the reaction a ubiquinone + NADH + 5 H(+)(in) = a ubiquinol + NAD(+) + 4 H(+)(out). In terms of biological role, core subunit of the mitochondrial membrane respiratory chain NADH dehydrogenase (Complex I) that is believed to belong to the minimal assembly required for catalysis. Complex I functions in the transfer of electrons from NADH to the respiratory chain. The immediate electron acceptor for the enzyme is believed to be ubiquinone. This is the largest subunit of complex I and it is a component of the iron-sulfur (IP) fragment of the enzyme. It may form part of the active site crevice where NADH is oxidized. The polypeptide is NADH-ubiquinone oxidoreductase 75 kDa subunit (nad11) (Dictyostelium discoideum (Social amoeba)).